A 246-amino-acid chain; its full sequence is uncharacterized protein (246 aa).

This is an uncharacterized protein from Campylobacter jejuni subsp. jejuni serotype O:2 (strain ATCC 700819 / NCTC 11168).